The chain runs to 89 residues: MKQDIHPNYQPVVFMDSTTGFKFLSGSTKGSSETVEWEDGNTYPLLRVEVTSDSHPFYTGRQKFTQADGRVDRFNKKYGLKDENANPDA.

This sequence belongs to the bacterial ribosomal protein bL31 family. Type B subfamily. Part of the 50S ribosomal subunit.

This is Large ribosomal subunit protein bL31B from Enterococcus faecalis (strain ATCC 700802 / V583).